A 199-amino-acid chain; its full sequence is Recombination protein RecR (199 aa).

The C4-type zinc finger occupies 57-72; it reads CEICGNMDTKNICHIC. The region spanning 80–175 is the Toprim domain; that stretch reads STIAIVETVA…KISRLASGIP (96 aa).

The protein belongs to the RecR family.

Its function is as follows. May play a role in DNA repair. It seems to be involved in an RecBC-independent recombinational process of DNA repair. It may act with RecF and RecO. In Rickettsia typhi (strain ATCC VR-144 / Wilmington), this protein is Recombination protein RecR.